We begin with the raw amino-acid sequence, 463 residues long: Annexin A7 (463 aa).

Composition is skewed to pro residues over residues 1 to 18 (MSYP…PGYP) and 26 to 38 (FPPP…PSGF). Disordered regions lie at residues 1-54 (MSYP…SSGY) and 71-153 (GYPG…THGT). A repeat-rich region region spans residues 1–140 (MSYPGYPPTG…QYPGGQSPYP (140 aa)). Residues 5–20 (GYPPTGYPPFPGYPPT) are 3 X 5 AA tandem repeats of G-Y-P-P-X. A compositionally biased stretch (gly residues) spans 86–99 (GGQGFGAPPGGAGF). Annexin repeat units follow at residues 160-231 (FDAM…ALFM), 232-303 (PSTY…SMCQ), 315-387 (QLAQ…TILQ), and 391-462 (NRPA…AIVG). At Lys208 the chain carries N6-acetyllysine.

This sequence belongs to the annexin family. As to quaternary structure, interacts with PDCD6.

Functionally, calcium/phospholipid-binding protein which promotes membrane fusion and is involved in exocytosis. In Bos taurus (Bovine), this protein is Annexin A7 (ANXA7).